The sequence spans 477 residues: Glycogen synthase (477 aa).

Lys15 serves as a coordination point for ADP-alpha-D-glucose.

The protein belongs to the glycosyltransferase 1 family. Bacterial/plant glycogen synthase subfamily.

It carries out the reaction [(1-&gt;4)-alpha-D-glucosyl](n) + ADP-alpha-D-glucose = [(1-&gt;4)-alpha-D-glucosyl](n+1) + ADP + H(+). Its pathway is glycan biosynthesis; glycogen biosynthesis. Functionally, synthesizes alpha-1,4-glucan chains using ADP-glucose. In Streptococcus pneumoniae (strain 70585), this protein is Glycogen synthase.